We begin with the raw amino-acid sequence, 332 residues long: Glycerol-3-phosphate dehydrogenase [NAD(P)+] (332 aa).

Residues S10, W11, K31, and K105 each contribute to the NADPH site. 3 residues coordinate sn-glycerol 3-phosphate: K105, G136, and S138. A140 provides a ligand contact to NADPH. K191, D244, S254, R255, and N256 together coordinate sn-glycerol 3-phosphate. K191 functions as the Proton acceptor in the catalytic mechanism. Position 255 (R255) interacts with NADPH. The NADPH site is built by V279 and E281.

Belongs to the NAD-dependent glycerol-3-phosphate dehydrogenase family.

Its subcellular location is the cytoplasm. The catalysed reaction is sn-glycerol 3-phosphate + NAD(+) = dihydroxyacetone phosphate + NADH + H(+). It carries out the reaction sn-glycerol 3-phosphate + NADP(+) = dihydroxyacetone phosphate + NADPH + H(+). It functions in the pathway membrane lipid metabolism; glycerophospholipid metabolism. Its function is as follows. Catalyzes the reduction of the glycolytic intermediate dihydroxyacetone phosphate (DHAP) to sn-glycerol 3-phosphate (G3P), the key precursor for phospholipid synthesis. The polypeptide is Glycerol-3-phosphate dehydrogenase [NAD(P)+] (Anaeromyxobacter dehalogenans (strain 2CP-C)).